The following is an 833-amino-acid chain: Zinc phosphodiesterase ELAC protein 2 homolog (833 aa).

A mitochondrion-targeting transit peptide spans Met1–His19. The segment covering Leu624 to Pro646 has biased composition (pro residues). A disordered region spans residues Leu624 to Leu652.

This sequence belongs to the RNase Z family. In terms of assembly, homodimer. It depends on Zn(2+) as a cofactor. As to expression, highly expressed in the germline.

The protein localises to the mitochondrion. It localises to the nucleus. It catalyses the reaction Endonucleolytic cleavage of RNA, removing extra 3' nucleotides from tRNA precursor, generating 3' termini of tRNAs. A 3'-hydroxy group is left at the tRNA terminus and a 5'-phosphoryl group is left at the trailer molecule.. Functionally, zinc phosphodiesterase, which displays some tRNA 3'-processing endonuclease activity. Probably involved in tRNA maturation, by removing a 3'-trailer from precursor tRNA. Involved in germline proliferation. May be required for both mitosis and meiosis in germ cells. In terms of biological role, does not regulate the mitochondrial unfolded protein response following mitochondrial stress. Its function is as follows. Plays a role in mitochondrial unfolded protein response. Upon mitochondrial stress is exported from the nucleus where its tRNA endonuclease activity is negatively regulated. In response to mitochondrial stress, might be involved in activating a transcriptional response in an ATFS-1- and DVE-1-dependent manner. May play a role in negatively regulating the mitochondrial membrane potential. In Caenorhabditis elegans, this protein is Zinc phosphodiesterase ELAC protein 2 homolog.